Reading from the N-terminus, the 214-residue chain is Adenylate kinase (214 aa).

An ATP-binding site is contributed by G10–T15. Positions S30–V59 are NMP. AMP-binding positions include T31, R36, Q57 to V59, G85 to R88, and Q92. Residues G122–D159 form an LID region. Residues R123 and T132 to Y133 contribute to the ATP site. R156 and R167 together coordinate AMP. Position 200 (K200) interacts with ATP.

This sequence belongs to the adenylate kinase family. Monomer.

Its subcellular location is the cytoplasm. The catalysed reaction is AMP + ATP = 2 ADP. The protein operates within purine metabolism; AMP biosynthesis via salvage pathway; AMP from ADP: step 1/1. Functionally, catalyzes the reversible transfer of the terminal phosphate group between ATP and AMP. Plays an important role in cellular energy homeostasis and in adenine nucleotide metabolism. This is Adenylate kinase from Vibrio vulnificus (strain YJ016).